A 360-amino-acid chain; its full sequence is Photosystem II protein D1 3 (360 aa).

A run of 3 helical transmembrane segments spans residues Tyr-29–Ile-46, His-118–Leu-133, and Trp-142–Ala-156. His-118 lines the chlorophyll a pocket. Tyr-126 lines the pheophytin a pocket. 2 residues coordinate [CaMn4O5] cluster: Asp-170 and Glu-189. A helical transmembrane segment spans residues Phe-197–Leu-218. His-198 is a chlorophyll a binding site. A quinone-binding positions include His-215 and Ser-264–Phe-265. His-215 provides a ligand contact to Fe cation. His-272 is a Fe cation binding site. The chain crosses the membrane as a helical span at residues Phe-274–Leu-288. [CaMn4O5] cluster contacts are provided by His-332, Glu-333, Asp-342, and Ala-344. Positions Ser-345–Ser-360 are excised as a propeptide.

This sequence belongs to the reaction center PufL/M/PsbA/D family. In terms of assembly, PSII is composed of 1 copy each of membrane proteins PsbA, PsbB, PsbC, PsbD, PsbE, PsbF, PsbH, PsbI, PsbJ, PsbK, PsbL, PsbM, PsbT, PsbX, PsbY, PsbZ, Psb30/Ycf12, peripheral proteins PsbO, CyanoQ (PsbQ), PsbU, PsbV and a large number of cofactors. It forms dimeric complexes. Requires The D1/D2 heterodimer binds P680, chlorophylls that are the primary electron donor of PSII, and subsequent electron acceptors. It shares a non-heme iron and each subunit binds pheophytin, quinone, additional chlorophylls, carotenoids and lipids. D1 provides most of the ligands for the Mn4-Ca-O5 cluster of the oxygen-evolving complex (OEC). There is also a Cl(-1) ion associated with D1 and D2, which is required for oxygen evolution. The PSII complex binds additional chlorophylls, carotenoids and specific lipids. as cofactor. In terms of processing, tyr-161 forms a radical intermediate that is referred to as redox-active TyrZ, YZ or Y-Z. Post-translationally, C-terminally processed by CtpA; processing is essential to allow assembly of the oxygen-evolving complex and thus photosynthetic growth.

It localises to the cellular thylakoid membrane. It carries out the reaction 2 a plastoquinone + 4 hnu + 2 H2O = 2 a plastoquinol + O2. Its function is as follows. Photosystem II (PSII) is a light-driven water:plastoquinone oxidoreductase that uses light energy to abstract electrons from H(2)O, generating O(2) and a proton gradient subsequently used for ATP formation. It consists of a core antenna complex that captures photons, and an electron transfer chain that converts photonic excitation into a charge separation. The D1/D2 (PsbA/PsbD) reaction center heterodimer binds P680, the primary electron donor of PSII as well as several subsequent electron acceptors. The protein is Photosystem II protein D1 3 of Nostoc sp. (strain PCC 7120 / SAG 25.82 / UTEX 2576).